The primary structure comprises 192 residues: Pyruvate kinase (192 aa).

Arg41 is a substrate binding site. K(+) is bound by residues Asn43, Ser45, Asp75, and Thr76. 43 to 46 (NFSH) is an ATP binding site.

This sequence belongs to the pyruvate kinase family. It depends on Mg(2+) as a cofactor. The cofactor is K(+).

It carries out the reaction pyruvate + ATP = phosphoenolpyruvate + ADP + H(+). It participates in carbohydrate degradation; glycolysis; pyruvate from D-glyceraldehyde 3-phosphate: step 5/5. This is Pyruvate kinase (pyk) from Spiroplasma citri.